We begin with the raw amino-acid sequence, 131 residues long: uncharacterized protein (131 aa).

The protein resides in the plastid. It localises to the chloroplast. This is an uncharacterized protein from Chlorella vulgaris (Green alga).